The chain runs to 329 residues: Serine dehydratase-like (329 aa).

Methionine 1 carries the N-acetylmethionine modification. Lysine 48 is subject to N6-(pyridoxal phosphate)lysine.

The protein belongs to the serine/threonine dehydratase family. As to quaternary structure, monomer. Homodimer. Pyridoxal 5'-phosphate serves as cofactor. In terms of tissue distribution, expressed in lung cancer cell lines.

The catalysed reaction is L-serine = pyruvate + NH4(+). The enzyme catalyses L-threonine = 2-oxobutanoate + NH4(+). It carries out the reaction L-glutamate = D-glutamate. Its function is as follows. Catalyzes the pyridoxal-phosphate-dependent dehydrative deamination of L-threonine and L-serine to ammonia and alpha-ketobutyrate and pyruvate, respectively. Also exhibits racemase activity towards L-glutamate and D-glutamate. This is Serine dehydratase-like (SDSL) from Homo sapiens (Human).